The primary structure comprises 221 residues: Vesicle-associated membrane protein 722 (221 aa).

Over 1-196 the chain is Cytoplasmic; sequence MAQQSLIYSF…MWFQNMKIKL (196 aa). A Longin domain is found at 10–114; that stretch reads FVARGTVILV…SLNKEFGSKL (105 aa). One can recognise a v-SNARE coiled-coil homology domain in the interval 130–190; the sequence is KLAKVKAQVS…TQMRRKMWFQ (61 aa). A helical; Anchor for type IV membrane protein transmembrane segment spans residues 197 to 217; sequence IVLAIIIALILIIILSICGGF. At 218 to 221 the chain is on the vesicular side; the sequence is NCGK.

The protein belongs to the synaptobrevin family. As to expression, highly expressed in stems and roots. Detected in flowers and leaves.

It is found in the cell membrane. The protein resides in the early endosome membrane. Its function is as follows. Involved in the targeting and/or fusion of transport vesicles to their target membrane. The protein is Vesicle-associated membrane protein 722 of Arabidopsis thaliana (Mouse-ear cress).